The chain runs to 326 residues: N-acetyl-gamma-glutamyl-phosphate reductase (326 aa).

The active site involves Cys-155.

This sequence belongs to the NAGSA dehydrogenase family. Type 1 subfamily.

Its subcellular location is the cytoplasm. The catalysed reaction is N-acetyl-L-glutamate 5-semialdehyde + phosphate + NADP(+) = N-acetyl-L-glutamyl 5-phosphate + NADPH + H(+). It participates in amino-acid biosynthesis; L-arginine biosynthesis; N(2)-acetyl-L-ornithine from L-glutamate: step 3/4. Its function is as follows. Catalyzes the NADPH-dependent reduction of N-acetyl-5-glutamyl phosphate to yield N-acetyl-L-glutamate 5-semialdehyde. The polypeptide is N-acetyl-gamma-glutamyl-phosphate reductase (Shewanella baltica (strain OS185)).